A 313-amino-acid chain; its full sequence is Ornithine carbamoyltransferase (313 aa).

Residues 57 to 60, Arg108, and 135 to 138 each bind carbamoyl phosphate; these read STRT and HPTQ. L-ornithine-binding positions include Asn167, Asp231, and 235 to 236; that span reads SM. Carbamoyl phosphate-binding positions include 272–273 and Arg300; that span reads CL.

It belongs to the aspartate/ornithine carbamoyltransferase superfamily. OTCase family.

It is found in the cytoplasm. The catalysed reaction is carbamoyl phosphate + L-ornithine = L-citrulline + phosphate + H(+). It participates in amino-acid biosynthesis; L-arginine biosynthesis; L-arginine from L-ornithine and carbamoyl phosphate: step 1/3. Its function is as follows. Reversibly catalyzes the transfer of the carbamoyl group from carbamoyl phosphate (CP) to the N(epsilon) atom of ornithine (ORN) to produce L-citrulline. This Thermotoga petrophila (strain ATCC BAA-488 / DSM 13995 / JCM 10881 / RKU-1) protein is Ornithine carbamoyltransferase.